Here is a 357-residue protein sequence, read N- to C-terminus: MIATINGDTKINGKGHPTEVRIPDMFGSIMSATPMVNPHHFKVKAAADAFIADYLKMDKHEATKNRKADFCFCASAMAPHADAEALRTMVDWLNWIFYFDDDFDEGQLDRDPVAAEKEIRHTLAVLEEGAEIPDRELHPLRYLFRTIWDRVKERAYPDVQTQFKITHKRYLDGLLHQVEATRDGNGQPRTEEDYIRMRRRTVGGYPCISLIAYAHNVDLSQEAFEHPSVQECIAVGCDLAWIHNDIVSYKKDVKSGIEHNFITVLKKNGFTTQQAMDRAGELQDECYRRWYLALASMPIWGESIDREVLRYIEACHSFPLGDLLWSFQTGRYLGATEGYKLHETRVLDLSDLEPIAV.

Mg(2+) contacts are provided by D100 and E105. A DDXXE motif motif is present at residues 100 to 105 (DDDFDE). R198 is a substrate binding site. The Mg(2+) site is built by N244 and S248. K251 is a substrate binding site. D252 lines the Mg(2+) pocket. Residue 331 to 332 (RY) coordinates substrate.

The protein belongs to the terpene synthase family. The cofactor is Mg(2+).

The catalysed reaction is (2E,6E)-farnesyl diphosphate = (+)-eremophilene + diphosphate. It participates in secondary metabolite biosynthesis; terpenoid biosynthesis. Catalyzes the conversion of (2E,6E)-farnesyl diphosphate (FPP) to yield the bicyclic sesquiterpene eremophilene via a 1,10-cyclization, which requires the abstraction of the pyrophosphate from FPP to yield the (E,E)-germacradienyl cation. The only accepted substrate is farnesyl diphosphate (FPP). This is (+)-eremophilene synthase from Gibberella fujikuroi (strain CBS 195.34 / IMI 58289 / NRRL A-6831) (Bakanae and foot rot disease fungus).